The primary structure comprises 569 residues: Neutral leucine aminopeptidase, chloroplastic (569 aa).

Residues 1–48 constitute a chloroplast transit peptide; it reads MNGVLCSSSSSFHSYPSIFTKFQSSPIWSFSISVTPLCSRRAKRMAHS. Lysine 339 and aspartate 344 together coordinate Mn(2+). Lysine 351 is an active-site residue. Residues aspartate 364, aspartate 424, and glutamate 426 each contribute to the Mn(2+) site. Arginine 428 is a catalytic residue.

This sequence belongs to the peptidase M17 family. Homohexamer (dimer of homotrimers). Requires Mn(2+) as cofactor. In terms of tissue distribution, expressed constitutively at low levels. Expressed in vegetative and reproductive organs, including leaves, stems, roots, cotyledons (after imbibition), pistils, sepals, petals, stamens, and floral buds (at protein level). Present at very low levels in healthy leaves.

It localises to the plastid. The protein resides in the chloroplast. It carries out the reaction Release of an N-terminal amino acid, Xaa-|-Yaa-, in which Xaa is preferably Leu, but may be other amino acids including Pro although not Arg or Lys, and Yaa may be Pro. Amino acid amides and methyl esters are also readily hydrolyzed, but rates on arylamides are exceedingly low.. The catalysed reaction is Release of N-terminal proline from a peptide.. Catalyzes the removal of unsubstituted N-terminal amino acids from various peptides. When associated as homohexamer, catalyzes the proteolyzes of Xaa-Leu dipeptides. Possesses leucine aminopeptidase activity against the model substrate leucine-amido methyl coumarin. Presumably involved in the processing and regular turnover of intracellular proteins. Its function is as follows. Functions as a molecular chaperone to protect proteins from heat-induced damage. The polypeptide is Neutral leucine aminopeptidase, chloroplastic (Solanum lycopersicum (Tomato)).